A 477-amino-acid polypeptide reads, in one-letter code: E3 ubiquitin-protein ligase TRIM17 (477 aa).

The segment at cysteine 16–arginine 66 adopts an RING-type zinc-finger fold. The B box-type zinc finger occupies glutamine 94–leucine 135. Zn(2+)-binding residues include cysteine 99, histidine 102, cysteine 121, and histidine 127. Residues leucine 135–aspartate 226 are a coiled coil. The region spanning alanine 276–valine 475 is the B30.2/SPRY domain.

The protein belongs to the TRIM/RBCC family. As to quaternary structure, interacts (via coiled coil) with TRIM44 (via coiled coil). Interacts with TRIM28; this interaction prevents TRIM28 activity on BCL2A1. Interacts with TRIM41; this interaction prevents TRIM41 activity on ZSCAN2. Interacts with BECN1. Interacts with NFATC3 and NFATC4; these interactions prevent NFATC3 and NFATC4 nuclear localization. Post-translationally, auto-ubiquitinated. As to expression, almost exclusively in the testis.

It localises to the cytoplasm. Its subcellular location is the lysosome. It catalyses the reaction S-ubiquitinyl-[E2 ubiquitin-conjugating enzyme]-L-cysteine + [acceptor protein]-L-lysine = [E2 ubiquitin-conjugating enzyme]-L-cysteine + N(6)-ubiquitinyl-[acceptor protein]-L-lysine.. The protein operates within protein modification; protein ubiquitination. In terms of biological role, E3 ubiquitin ligase that plays important roles in the regulation of neuronal apoptosis, selective autophagy or cell proliferation. Stimulates the degradation of kinetochore ZW10 interacting protein ZWINT in a proteasome-dependent manner, leading to negative regulation of cell proliferation. Inhibits autophagic degradation of diverse known targets while contributing to autophagy of midbodies. Autophagy-inhibitory activity involves MCL1, which TRIM17 assembles into complexes with the key autophagy regulator BECN1. Controls neuronal apoptosis by mediating ubiquitination and degradation of MCL1 to initiate neuronal death. In addition, regulates NFAT transcription factors NFATC3 and NFATC4 activities by preventing their nuclear localization, thus inhibiting their transcriptional activities. Decreases TRIM41-mediated degradation of ZSCAN2 thereby stimulating alpha-synuclein/SNCA transcription in neuronal cells. Prevents the E3 ubiquitin-ligase activity of TRIM28 and its interaction with anti-apoptotic BCL2A1, blocking TRIM28 from ubiquitinating BCL2A1. This chain is E3 ubiquitin-protein ligase TRIM17 (Trim17), found in Mus musculus (Mouse).